The following is a 2406-amino-acid chain: Highly reducing polyketide synthase dmxL2 (2406 aa).

A Ketosynthase family 3 (KS3) domain is found at 1 to 399 (MEAFWSASKK…GTNAHAVLDD (399 aa)). Cysteine 130 is an active-site residue. Cysteine 130 (for beta-ketoacyl synthase activity) is an active-site residue. The tract at residues 414 to 476 (GHASNGTNGT…GPTDGPTSRP (63 aa)) is disordered. The span at 417 to 448 (SNGTNGTLTNGHILNGEHTSNGMNGTLTNGHA) shows a compositional bias: polar residues. The segment at 574-911 (FVFTGQGAQW…LAGSLFTQGY (338 aa)) is malonyl-CoA:ACP transacylase (MAT) domain. Serine 665 acts as the For malonyltransferase activity in catalysis. Residues 962–1096 (PSLLGSPSPS…GLLVIEYEAA (135 aa)) form an N-terminal hotdog fold region. The region spanning 962–1278 (PSLLGSPSPS…CAEIAGASSN (317 aa)) is the PKS/mFAS DH domain. The tract at residues 964–1273 (LLGSPSPSLA…IEGFLCAEIA (310 aa)) is dehydratase (DH) domain. Histidine 994 functions as the Proton acceptor; for dehydratase activity in the catalytic mechanism. The interval 1124-1278 (VHRLDPSGFY…CAEIAGASSN (155 aa)) is C-terminal hotdog fold. The active-site Proton donor; for dehydratase activity is aspartate 1189. Positions 1694–2006 (GMLGSVCLEP…TGKHLGKIAL (313 aa)) are enoylreductase (ER) domain. The segment at 2032-2210 (GVYLLVGGLG…TTVDLGIMRD (179 aa)) is ketoreductase (KR) domain. One can recognise a Carrier domain in the interval 2318–2395 (EASDSVLEAL…TFCNRIAAKS (78 aa)). Serine 2355 carries the post-translational modification O-(pantetheine 4'-phosphoryl)serine.

Its pathway is secondary metabolite biosynthesis. Its function is as follows. Highly reducing polyketide synthase; part of the gene cluster that mediates the biosynthesis of the dimeric xanthones cryptosporioptides. The pathway begins with the synthesis of atrochrysone thioester by the polyketide synthase dmx-nrPKS. The atrochrysone carboxyl ACP thioesterase dmxR1 then breaks the thioester bond and releases the atrochrysone carboxylic acid from dmx-nrPKS. Atrochrysone carboxylic acid is decarboxylated by the decarboxylase dmxR15, and oxidized by the anthrone oxygenase dmxR16 to yield emodin. Emodin is then reduced to emodin hydroquinone by the oxidoreductase dmxR7. A-ring reduction by the short chain dehydrogenase dmxR18, dehydration by the scytalone dehydratase-like protein dmxR17 and probable spontaneous re-oxidation, results in overall deoxygenation to chrysophanol. Baeyer-Villiger oxidation by the Baeyer-Villiger monooxygenase (BVMO) dmxR6 then yields monodictylactone in equilibrium with monodictyphenone. In the case of the cryptosporioptides biosynthesis, monodictylactone is reduced at C-12 to an alcohol (by the short chain dehydrogenases dmxR12 or dmxR8) and hydroxylated at C-5 by dmxR9, yielding the electron-rich aromatic which could eliminate H(2)O to form the ortho-quinonemethide, followed by tautomerisation to paraquinone and complete the formal reduction to produce the 10-methylgroup. Conjugate addition of C-4a-OH to the resulting paraquinone by the monooxygenase dmxR10 then gives cyclohexadienone, which is then reduced at C-5 by the short chain dehydrogenase dmxR3 to give the dihydroxanthone. The 6,7-epoxide in the cryptosporioptides could be introduced by the cytochrome P450 monooxygenase dmxL3. The highly reducing PKS dmxL2 manufactures butyrate, which is further carboxylated by dmxL1 to form ethylmalonate. It is not yet clear whether the carboxylation occurs while the butyrate is attached to the ACP of dmxL2, but this unusual fungal metabolite could then be esterified to O-5 by the O-acetyltransferase dmxR13. Finally, dimerization performed by dmxR5 gives the observed dimers cryptosporioptides A, B and C as the final products of the pathway. The chain is Highly reducing polyketide synthase dmxL2 from Cryptosporiopsis sp. (strain 8999).